The primary structure comprises 245 residues: Demethylmenaquinone methyltransferase (245 aa).

S-adenosyl-L-methionine is bound by residues Thr-58, Asp-79, and 106–107 (NA).

Belongs to the class I-like SAM-binding methyltransferase superfamily. MenG/UbiE family.

It carries out the reaction a 2-demethylmenaquinol + S-adenosyl-L-methionine = a menaquinol + S-adenosyl-L-homocysteine + H(+). Its pathway is quinol/quinone metabolism; menaquinone biosynthesis; menaquinol from 1,4-dihydroxy-2-naphthoate: step 2/2. Functionally, methyltransferase required for the conversion of demethylmenaquinol (DMKH2) to menaquinol (MKH2). The protein is Demethylmenaquinone methyltransferase of Halalkalibacterium halodurans (strain ATCC BAA-125 / DSM 18197 / FERM 7344 / JCM 9153 / C-125) (Bacillus halodurans).